Consider the following 109-residue polypeptide: Elongation factor G, chloroplastic (109 aa).

The protein belongs to the GTP-binding elongation factor family. EF-G/EF-2 subfamily.

It is found in the plastid. Its subcellular location is the chloroplast. It functions in the pathway protein biosynthesis; polypeptide chain elongation. Functionally, chloroplast-localized elongation factor EF-G involved in protein synthesis in plastids. Catalyzes the GTP-dependent ribosomal translocation step during translation elongation. During this step, the ribosome changes from the pre-translocational (PRE) to the post-translocational (POST) state as the newly formed A-site-bound peptidyl-tRNA and P-site-bound deacylated tRNA move to the P and E sites, respectively. Catalyzes the coordinated movement of the two tRNA molecules, the mRNA and conformational changes in the ribosome. The chain is Elongation factor G, chloroplastic from Arachis hypogaea (Peanut).